Consider the following 312-residue polypeptide: Olfactory receptor 6B2 (312 aa).

Residues 1–25 lie on the Extracellular side of the membrane; it reads MSGENVTKVSTFILVGLPTAPGLQY. N-linked (GlcNAc...) asparagine glycosylation occurs at N5. A helical membrane pass occupies residues 26-46; sequence LLFLLFLLTYLFVLVENLAII. The Cytoplasmic portion of the chain corresponds to 47–54; the sequence is LIVWSSTS. The chain crosses the membrane as a helical span at residues 55 to 75; that stretch reads LHRPMYYFLSSMSFLEIWYVS. Residues 76–99 lie on the Extracellular side of the membrane; it reads DITPKMLEGFLLQQKRISFVGCMT. C97 and C189 are oxidised to a cystine. Residues 100–120 form a helical membrane-spanning segment; it reads QLYFFSSLVCTECVLLASMAY. Over 121 to 139 the chain is Cytoplasmic; the sequence is DRYVAICHPLRYHVLVTPG. The helical transmembrane segment at 140-160 threads the bilayer; sequence LCLQLVGFSFVSGFTISMIKV. The Extracellular segment spans residues 161–196; sequence CFISSVTFCGSNVLNHFFCDISPILKLACTDFSTAE. A helical transmembrane segment spans residues 197–217; it reads LVDFILAFIILVFPLLATILS. Topologically, residues 218–237 are cytoplasmic; the sequence is YWHITLAVLRIPSATGCWRA. Residues 238–258 traverse the membrane as a helical segment; it reads FSTCASHLTVVTVFYTALLFM. Residues 259-271 are Extracellular-facing; sequence YVRPQAIDSQSSN. The helical transmembrane segment at 272–292 threads the bilayer; sequence KLISAVYTVVTPIINPLIYCL. Residues 293 to 312 are Cytoplasmic-facing; it reads RNKEFKDALKKALGLGQTSH.

It belongs to the G-protein coupled receptor 1 family.

It localises to the cell membrane. Functionally, odorant receptor. The protein is Olfactory receptor 6B2 (OR6B2) of Homo sapiens (Human).